A 166-amino-acid polypeptide reads, in one-letter code: NAD(P)H-quinone oxidoreductase subunit I, chloroplastic (166 aa).

4Fe-4S ferredoxin-type domains follow at residues 55-84 (GRIH…VDWK) and 95-124 (LNYS…MTEE). Residues cysteine 64, cysteine 67, cysteine 70, cysteine 74, cysteine 104, cysteine 107, cysteine 110, and cysteine 114 each coordinate [4Fe-4S] cluster.

Belongs to the complex I 23 kDa subunit family. NDH is composed of at least 16 different subunits, 5 of which are encoded in the nucleus. [4Fe-4S] cluster is required as a cofactor.

The protein localises to the plastid. The protein resides in the chloroplast thylakoid membrane. It carries out the reaction a plastoquinone + NADH + (n+1) H(+)(in) = a plastoquinol + NAD(+) + n H(+)(out). The catalysed reaction is a plastoquinone + NADPH + (n+1) H(+)(in) = a plastoquinol + NADP(+) + n H(+)(out). In terms of biological role, NDH shuttles electrons from NAD(P)H:plastoquinone, via FMN and iron-sulfur (Fe-S) centers, to quinones in the photosynthetic chain and possibly in a chloroplast respiratory chain. The immediate electron acceptor for the enzyme in this species is believed to be plastoquinone. Couples the redox reaction to proton translocation, and thus conserves the redox energy in a proton gradient. In Encelia californica (Bush sunflower), this protein is NAD(P)H-quinone oxidoreductase subunit I, chloroplastic.